The chain runs to 388 residues: Succinate--CoA ligase [ADP-forming] subunit beta (388 aa).

An ATP-grasp domain is found at 9–246 (KDILRQFGVP…FEEEDPAEVL (238 aa)). ATP is bound by residues lysine 46, 53–55 (GRG), glutamate 99, alanine 102, and glutamate 107. Residues asparagine 201 and aspartate 215 each contribute to the Mg(2+) site. Substrate contacts are provided by residues asparagine 266 and 323–325 (GIM).

The protein belongs to the succinate/malate CoA ligase beta subunit family. Heterotetramer of two alpha and two beta subunits. Mg(2+) serves as cofactor.

The enzyme catalyses succinate + ATP + CoA = succinyl-CoA + ADP + phosphate. The catalysed reaction is GTP + succinate + CoA = succinyl-CoA + GDP + phosphate. It participates in carbohydrate metabolism; tricarboxylic acid cycle; succinate from succinyl-CoA (ligase route): step 1/1. Functionally, succinyl-CoA synthetase functions in the citric acid cycle (TCA), coupling the hydrolysis of succinyl-CoA to the synthesis of either ATP or GTP and thus represents the only step of substrate-level phosphorylation in the TCA. The beta subunit provides nucleotide specificity of the enzyme and binds the substrate succinate, while the binding sites for coenzyme A and phosphate are found in the alpha subunit. This Verminephrobacter eiseniae (strain EF01-2) protein is Succinate--CoA ligase [ADP-forming] subunit beta.